We begin with the raw amino-acid sequence, 328 residues long: P2Y purinoceptor 3 (328 aa).

Topologically, residues 1-22 (MSMANFTAGRNSCTFQEEFKQV) are extracellular. The N-linked (GlcNAc...) asparagine glycan is linked to N5. The helical transmembrane segment at 23–43 (LLPLVYSVVFLLGLPLNAVVI) threads the bilayer. Residues 44–57 (GQIWLARKALTRTT) lie on the Cytoplasmic side of the membrane. A helical transmembrane segment spans residues 58–78 (IYMLNLATADLLYVCSLPLLI). Residues 79–96 (YNYTQKDYWPFGDFTCKF) lie on the Extracellular side of the membrane. The cysteines at positions 94 and 172 are disulfide-linked. A helical membrane pass occupies residues 97–117 (VRFQFYTNLHGSILFLTCISV). Residues 118–139 (QRYMGICHPLASWHKKKGKKLT) are Cytoplasmic-facing. A helical transmembrane segment spans residues 140–160 (WLVCAAVWFIVIAQCLPTFVF). The Extracellular portion of the chain corresponds to 161–189 (ASTGTQRNRTVCYDLSPPDRSASYFPYGI). The chain crosses the membrane as a helical span at residues 190-210 (TLTITGFLLPFAAILACYCSM). At 211–231 (ARILCQKDELIGLAVHKKKDK) the chain is on the cytoplasmic side. The helical transmembrane segment at 232-252 (AVRMIIIVVIVFSISFFPFHL) threads the bilayer. Topologically, residues 253 to 275 (TKTIYLIVRSSPTLPCPTLQAFA) are extracellular. Residues 276–298 (IAYKCTRPFASMNSVLDPILFYF) form a helical membrane-spanning segment. Topologically, residues 299 to 323 (TQRKFRESTRYLLDKMSSKWRHDHC) are cytoplasmic.

This sequence belongs to the G-protein coupled receptor 1 family.

Its subcellular location is the cell membrane. Its function is as follows. Receptor for extracellular UDP &gt; ADP = UTP. The activity of this receptor is mediated by G proteins which activate a phosphatidylinositol-calcium second messenger system. The chain is P2Y purinoceptor 3 (P2RY3) from Meleagris gallopavo (Wild turkey).